A 211-amino-acid polypeptide reads, in one-letter code: Ribosomal RNA small subunit methyltransferase G (211 aa).

S-adenosyl-L-methionine is bound by residues glycine 73, 125–126 (IE), and arginine 141.

This sequence belongs to the methyltransferase superfamily. RNA methyltransferase RsmG family.

Its subcellular location is the cytoplasm. The enzyme catalyses guanosine(527) in 16S rRNA + S-adenosyl-L-methionine = N(7)-methylguanosine(527) in 16S rRNA + S-adenosyl-L-homocysteine. Its function is as follows. Specifically methylates the N7 position of guanine in position 527 of 16S rRNA. This Methylobacterium radiotolerans (strain ATCC 27329 / DSM 1819 / JCM 2831 / NBRC 15690 / NCIMB 10815 / 0-1) protein is Ribosomal RNA small subunit methyltransferase G.